The following is a 235-amino-acid chain: Uracil-DNA glycosylase (235 aa).

D71 acts as the Proton acceptor in catalysis.

This sequence belongs to the uracil-DNA glycosylase (UDG) superfamily. UNG family.

Its subcellular location is the cytoplasm. It carries out the reaction Hydrolyzes single-stranded DNA or mismatched double-stranded DNA and polynucleotides, releasing free uracil.. In terms of biological role, excises uracil residues from the DNA which can arise as a result of misincorporation of dUMP residues by DNA polymerase or due to deamination of cytosine. This is Uracil-DNA glycosylase from Campylobacter hominis (strain ATCC BAA-381 / DSM 21671 / CCUG 45161 / LMG 19568 / NCTC 13146 / CH001A).